Reading from the N-terminus, the 577-residue chain is Arginine--tRNA ligase (577 aa).

The 'HIGH' region motif lies at 122–132 (PNVAKEMHVGH).

The protein belongs to the class-I aminoacyl-tRNA synthetase family. Monomer.

Its subcellular location is the cytoplasm. The catalysed reaction is tRNA(Arg) + L-arginine + ATP = L-arginyl-tRNA(Arg) + AMP + diphosphate. The protein is Arginine--tRNA ligase of Vibrio vulnificus (strain YJ016).